We begin with the raw amino-acid sequence, 379 residues long: Histidinol-phosphate aminotransferase (379 aa).

At lysine 236 the chain carries N6-(pyridoxal phosphate)lysine.

Belongs to the class-II pyridoxal-phosphate-dependent aminotransferase family. Histidinol-phosphate aminotransferase subfamily. Homodimer. The cofactor is pyridoxal 5'-phosphate.

The enzyme catalyses L-histidinol phosphate + 2-oxoglutarate = 3-(imidazol-4-yl)-2-oxopropyl phosphate + L-glutamate. The protein operates within amino-acid biosynthesis; L-histidine biosynthesis; L-histidine from 5-phospho-alpha-D-ribose 1-diphosphate: step 7/9. The protein is Histidinol-phosphate aminotransferase of Desulfotalea psychrophila (strain LSv54 / DSM 12343).